The sequence spans 106 residues: NADH-quinone oxidoreductase subunit K (106 aa).

3 helical membrane passes run 10–30 (IHYY…GVMV), 35–55 (VLIF…FVTF), and 67–87 (VVFF…AIVI).

The protein belongs to the complex I subunit 4L family. NDH-1 is composed of 14 different subunits. Subunits NuoA, H, J, K, L, M, N constitute the membrane sector of the complex.

Its subcellular location is the cell inner membrane. It carries out the reaction a quinone + NADH + 5 H(+)(in) = a quinol + NAD(+) + 4 H(+)(out). NDH-1 shuttles electrons from NADH, via FMN and iron-sulfur (Fe-S) centers, to quinones in the respiratory chain. The immediate electron acceptor for the enzyme in this species is believed to be ubiquinone. Couples the redox reaction to proton translocation (for every two electrons transferred, four hydrogen ions are translocated across the cytoplasmic membrane), and thus conserves the redox energy in a proton gradient. The polypeptide is NADH-quinone oxidoreductase subunit K (Leptospira interrogans serogroup Icterohaemorrhagiae serovar copenhageni (strain Fiocruz L1-130)).